A 320-amino-acid polypeptide reads, in one-letter code: o-succinylbenzoate synthase (320 aa).

The Proton donor role is filled by lysine 133. Residues aspartate 161, glutamate 190, and aspartate 213 each contribute to the Mg(2+) site. Lysine 235 serves as the catalytic Proton acceptor.

The protein belongs to the mandelate racemase/muconate lactonizing enzyme family. MenC type 1 subfamily. The cofactor is a divalent metal cation.

It carries out the reaction (1R,6R)-6-hydroxy-2-succinyl-cyclohexa-2,4-diene-1-carboxylate = 2-succinylbenzoate + H2O. It participates in quinol/quinone metabolism; 1,4-dihydroxy-2-naphthoate biosynthesis; 1,4-dihydroxy-2-naphthoate from chorismate: step 4/7. It functions in the pathway quinol/quinone metabolism; menaquinone biosynthesis. Its function is as follows. Converts 2-succinyl-6-hydroxy-2,4-cyclohexadiene-1-carboxylate (SHCHC) to 2-succinylbenzoate (OSB). The protein is o-succinylbenzoate synthase of Shigella boydii serotype 18 (strain CDC 3083-94 / BS512).